A 98-amino-acid chain; its full sequence is NADH-ubiquinone oxidoreductase chain 4L (98 aa).

3 helical membrane passes run 1-21 (MSMV…GLLM), 29-49 (SLLC…LMIL), and 61-81 (IILL…LVMI).

This sequence belongs to the complex I subunit 4L family. As to quaternary structure, core subunit of respiratory chain NADH dehydrogenase (Complex I) which is composed of 45 different subunits.

It is found in the mitochondrion inner membrane. It carries out the reaction a ubiquinone + NADH + 5 H(+)(in) = a ubiquinol + NAD(+) + 4 H(+)(out). Its function is as follows. Core subunit of the mitochondrial membrane respiratory chain NADH dehydrogenase (Complex I) which catalyzes electron transfer from NADH through the respiratory chain, using ubiquinone as an electron acceptor. Part of the enzyme membrane arm which is embedded in the lipid bilayer and involved in proton translocation. The chain is NADH-ubiquinone oxidoreductase chain 4L (MT-ND4L) from Vicugna pacos (Alpaca).